The chain runs to 611 residues: DNA mismatch repair protein MutL (611 aa).

Residues 353–387 (NRQAAGGNHFATPAPAAAPRPASTASSSWQRQEPV) are disordered. The span at 363 to 380 (ATPAPAAAPRPASTASSS) shows a compositional bias: low complexity.

The protein belongs to the DNA mismatch repair MutL/HexB family.

Its function is as follows. This protein is involved in the repair of mismatches in DNA. It is required for dam-dependent methyl-directed DNA mismatch repair. May act as a 'molecular matchmaker', a protein that promotes the formation of a stable complex between two or more DNA-binding proteins in an ATP-dependent manner without itself being part of a final effector complex. In Erwinia tasmaniensis (strain DSM 17950 / CFBP 7177 / CIP 109463 / NCPPB 4357 / Et1/99), this protein is DNA mismatch repair protein MutL.